The sequence spans 93 residues: Small ribosomal subunit protein bS20 (93 aa).

Positions 1–11 (MPQHKSAEKRV) are enriched in basic and acidic residues. The disordered stretch occupies residues 1–23 (MPQHKSAEKRVRQSKRRNARNRV). Residues 12–23 (RQSKRRNARNRV) are compositionally biased toward basic residues.

This sequence belongs to the bacterial ribosomal protein bS20 family.

Functionally, binds directly to 16S ribosomal RNA. In Chloroherpeton thalassium (strain ATCC 35110 / GB-78), this protein is Small ribosomal subunit protein bS20.